The sequence spans 253 residues: Triosephosphate isomerase (253 aa).

9–11 is a substrate binding site; the sequence is NWK. The active-site Electrophile is His97. Glu169 serves as the catalytic Proton acceptor. Substrate-binding positions include Gly175, Ser215, and 236–237; that span reads GG.

This sequence belongs to the triosephosphate isomerase family. In terms of assembly, homodimer.

It localises to the cytoplasm. The catalysed reaction is D-glyceraldehyde 3-phosphate = dihydroxyacetone phosphate. The protein operates within carbohydrate biosynthesis; gluconeogenesis. Its pathway is carbohydrate degradation; glycolysis; D-glyceraldehyde 3-phosphate from glycerone phosphate: step 1/1. Involved in the gluconeogenesis. Catalyzes stereospecifically the conversion of dihydroxyacetone phosphate (DHAP) to D-glyceraldehyde-3-phosphate (G3P). The chain is Triosephosphate isomerase from Staphylococcus haemolyticus (strain JCSC1435).